The sequence spans 188 residues: Elongation factor P (188 aa).

It belongs to the elongation factor P family.

The protein localises to the cytoplasm. It functions in the pathway protein biosynthesis; polypeptide chain elongation. Functionally, involved in peptide bond synthesis. Stimulates efficient translation and peptide-bond synthesis on native or reconstituted 70S ribosomes in vitro. Probably functions indirectly by altering the affinity of the ribosome for aminoacyl-tRNA, thus increasing their reactivity as acceptors for peptidyl transferase. The sequence is that of Elongation factor P from Gluconobacter oxydans (strain 621H) (Gluconobacter suboxydans).